Reading from the N-terminus, the 313-residue chain is Ribose-phosphate pyrophosphokinase (313 aa).

ATP is bound by residues 37–39 and 96–97; these read DGE and RQ. Residues His-131 and Asp-170 each coordinate Mg(2+). Residue Lys-193 is part of the active site. D-ribose 5-phosphate contacts are provided by residues Arg-195, Asp-219, and 223–227; that span reads DTAGT.

The protein belongs to the ribose-phosphate pyrophosphokinase family. Class I subfamily. As to quaternary structure, homohexamer. Mg(2+) is required as a cofactor.

The protein resides in the cytoplasm. The catalysed reaction is D-ribose 5-phosphate + ATP = 5-phospho-alpha-D-ribose 1-diphosphate + AMP + H(+). It participates in metabolic intermediate biosynthesis; 5-phospho-alpha-D-ribose 1-diphosphate biosynthesis; 5-phospho-alpha-D-ribose 1-diphosphate from D-ribose 5-phosphate (route I): step 1/1. Functionally, involved in the biosynthesis of the central metabolite phospho-alpha-D-ribosyl-1-pyrophosphate (PRPP) via the transfer of pyrophosphoryl group from ATP to 1-hydroxyl of ribose-5-phosphate (Rib-5-P). This chain is Ribose-phosphate pyrophosphokinase, found in Pseudomonas syringae pv. tomato (strain ATCC BAA-871 / DC3000).